The primary structure comprises 519 residues: UvrABC system protein C (519 aa).

In terms of domain architecture, GIY-YIG spans 9–87 (HLPGCYLFKN…IKKHWPRYNI (79 aa)). In terms of domain architecture, UVR spans 191–226 (RELIESMEKDMRELASRQQFEQAMALRDEIAALEYL).

The protein belongs to the UvrC family. As to quaternary structure, interacts with UvrB in an incision complex.

The protein localises to the cytoplasm. Functionally, the UvrABC repair system catalyzes the recognition and processing of DNA lesions. UvrC both incises the 5' and 3' sides of the lesion. The N-terminal half is responsible for the 3' incision and the C-terminal half is responsible for the 5' incision. The chain is UvrABC system protein C from Methanosarcina barkeri (strain Fusaro / DSM 804).